We begin with the raw amino-acid sequence, 103 residues long: NADH-quinone oxidoreductase subunit K (103 aa).

The next 3 membrane-spanning stretches (helical) occupy residues 5-25 (ISSYLMVALILFCVGLYGALT), 30-50 (VVVLLSIELMLNAVNINLVAF), and 66-86 (LFTMTVAAAEVAVGLAILIAL).

The protein belongs to the complex I subunit 4L family. In terms of assembly, NDH-1 is composed of 14 different subunits. Subunits NuoA, H, J, K, L, M, N constitute the membrane sector of the complex.

Its subcellular location is the cell membrane. It carries out the reaction a quinone + NADH + 5 H(+)(in) = a quinol + NAD(+) + 4 H(+)(out). NDH-1 shuttles electrons from NADH, via FMN and iron-sulfur (Fe-S) centers, to quinones in the respiratory chain. The immediate electron acceptor for the enzyme in this species is believed to be a menaquinone. Couples the redox reaction to proton translocation (for every two electrons transferred, four hydrogen ions are translocated across the cytoplasmic membrane), and thus conserves the redox energy in a proton gradient. The polypeptide is NADH-quinone oxidoreductase subunit K (Brevibacillus brevis (strain 47 / JCM 6285 / NBRC 100599)).